Here is a 127-residue protein sequence, read N- to C-terminus: uncharacterized protein (127 aa).

Residues 91–113 form a helical membrane-spanning segment; it reads IYLIVSIAVSILAIIAFFIFLML.

It localises to the membrane. This is an uncharacterized protein from Bacillus subtilis (strain 168).